Here is a 156-residue protein sequence, read N- to C-terminus: Arginine repressor (156 aa).

This sequence belongs to the ArgR family.

It localises to the cytoplasm. Its pathway is amino-acid biosynthesis; L-arginine biosynthesis [regulation]. In terms of biological role, regulates arginine biosynthesis genes. This Salmonella agona (strain SL483) protein is Arginine repressor.